Reading from the N-terminus, the 787-residue chain is Integrin beta-6 (787 aa).

A signal peptide spans 1–21; sequence MGIELVCLFLLLLGRNDHVQG. The PSI domain occupies 22 to 71; the sequence is GCAWSGAETCSDCLLTGPHCAWCSQENFTHLSGAGERCDTPENLLAKGCQ. Topologically, residues 22-708 are extracellular; that stretch reads GCAWSGAETC…KDCPKPPNIP (687 aa). 19 disulfide bridges follow: C23-C41, C31-C454, C34-C59, C44-C70, C197-C204, C252-C293, C394-C406, C426-C452, C456-C476, C467-C479, C481-C490, C492-C519, C502-C517, C511-C522, C524-C537, C539-C560, C544-C558, C552-C563, and C565-C574. N48 and N97 each carry an N-linked (GlcNAc...) asparagine glycan. The VWFA domain maps to 131–371; it reads YPVDLYYLMD…QLIISAYEEL (241 aa). Mg(2+)-binding residues include D140, S142, and S144. S144, D147, D148, and E179 together coordinate Ca(2+). 4 residues coordinate Ca(2+): N235, D237, P239, and E240. Residue E240 coordinates Mg(2+). N-linked (GlcNAc...) asparagine glycosylation is present at N260. Ca(2+) contacts are provided by D271 and K355. An N-linked (GlcNAc...) asparagine glycan is attached at N387. N-linked (GlcNAc...) asparagine glycosylation is present at N418. I-EGF domains are found at residues 456 to 491, 492 to 538, 539 to 575, and 576 to 615; these read CQRE…PRCE, CGED…PYCQ, CDNF…EYCN, and CTTS…PTCE. N-linked (GlcNAc...) asparagine glycosylation is found at N463 and N471. The N-linked (GlcNAc...) asparagine glycan is linked to N541. N-linked (GlcNAc...) asparagine glycosylation occurs at N575. 9 disulfide bridges follow: C576–C599, C583–C597, C591–C602, C604–C614, C617–C620, C624–C669, C630–C649, C633–C645, and C677–C701. N-linked (GlcNAc...) asparagine glycosylation occurs at N695. Residues 709–729 form a helical membrane-spanning segment; sequence MIMLGVSLAILLIGVVLLCIW. The segment at 730-757 is interaction with HAX1; it reads KLLVSFHDRKEVAKFEAERSKAKWQTGT. The Cytoplasmic segment spans residues 730 to 787; the sequence is KLLVSFHDRKEVAKFEAERSKAKWQTGTNPLYRGSTSTFKNVTYKHREKHKVGLSSDG.

The protein belongs to the integrin beta chain family. As to quaternary structure, heterodimer of an alpha and a beta subunit. Interacts with FLNB. Interacts with HAX1. ITGAV:ITGB6 interacts with FBN1. ITGAV:ITGB6 interacts with TGFB1.

It is found in the cell membrane. Its subcellular location is the cell junction. The protein resides in the focal adhesion. Functionally, integrin alpha-V:beta-6 (ITGAV:ITGB6) is a receptor for fibronectin and cytotactin. It recognizes the sequence R-G-D in its ligands. ITGAV:ITGB6 acts as a receptor for fibrillin-1 (FBN1) and mediates R-G-D-dependent cell adhesion to FBN1. Integrin alpha-V:beta-6 (ITGAV:ITGB6) mediates R-G-D-dependent release of transforming growth factor beta-1 (TGF-beta-1) from regulatory Latency-associated peptide (LAP), thereby playing a key role in TGF-beta-1 activation. The chain is Integrin beta-6 (Itgb6) from Rattus norvegicus (Rat).